Here is a 474-residue protein sequence, read N- to C-terminus: Cyclin-dependent kinase 18 (474 aa).

A phosphoserine mark is found at serine 14, serine 74, serine 89, serine 98, serine 117, and serine 132. Positions 44-87 (DLQLGPLGRDPLQECSTFSPTDSGEEPGQLSPGVQFQRRQNQRR) are disordered. The Protein kinase domain maps to 144-425 (YVKLDKLGEG…AEAALSHPYF (282 aa)). ATP is bound by residues 150–158 (LGEGTYATV) and lysine 173. Aspartate 265 (proton acceptor) is an active-site residue. Serine 440 and serine 443 each carry phosphoserine.

This sequence belongs to the protein kinase superfamily. CMGC Ser/Thr protein kinase family. CDC2/CDKX subfamily.

The enzyme catalyses L-seryl-[protein] + ATP = O-phospho-L-seryl-[protein] + ADP + H(+). It catalyses the reaction L-threonyl-[protein] + ATP = O-phospho-L-threonyl-[protein] + ADP + H(+). In terms of biological role, may play a role in signal transduction cascades in terminally differentiated cells. The protein is Cyclin-dependent kinase 18 (CDK18) of Pongo abelii (Sumatran orangutan).